Here is a 322-residue protein sequence, read N- to C-terminus: Ribosomal RNA small subunit methyltransferase H (322 aa).

Residues 35-37, aspartate 52, phenylalanine 79, aspartate 100, and glutamine 107 contribute to the S-adenosyl-L-methionine site; that span reads GGY. A disordered region spans residues 254-322; that stretch reads GATPAGSRHL…TAPKKEGRQG (69 aa). A compositionally biased stretch (low complexity) spans 295–309; sequence SRSATLRVARRTAAA.

Belongs to the methyltransferase superfamily. RsmH family.

The protein resides in the cytoplasm. It catalyses the reaction cytidine(1402) in 16S rRNA + S-adenosyl-L-methionine = N(4)-methylcytidine(1402) in 16S rRNA + S-adenosyl-L-homocysteine + H(+). In terms of biological role, specifically methylates the N4 position of cytidine in position 1402 (C1402) of 16S rRNA. The chain is Ribosomal RNA small subunit methyltransferase H from Rhizorhabdus wittichii (strain DSM 6014 / CCUG 31198 / JCM 15750 / NBRC 105917 / EY 4224 / RW1) (Sphingomonas wittichii).